Consider the following 617-residue polypeptide: Dihydroxy-acid dehydratase (617 aa).

Asp-81 lines the Mg(2+) pocket. Residue Cys-122 participates in [2Fe-2S] cluster binding. Positions 123 and 124 each coordinate Mg(2+). Lys-124 is modified (N6-carboxylysine). Cys-195 is a binding site for [2Fe-2S] cluster. Residue Glu-491 coordinates Mg(2+). Catalysis depends on Ser-517, which acts as the Proton acceptor.

It belongs to the IlvD/Edd family. In terms of assembly, homodimer. It depends on [2Fe-2S] cluster as a cofactor. Mg(2+) serves as cofactor.

The enzyme catalyses (2R)-2,3-dihydroxy-3-methylbutanoate = 3-methyl-2-oxobutanoate + H2O. It carries out the reaction (2R,3R)-2,3-dihydroxy-3-methylpentanoate = (S)-3-methyl-2-oxopentanoate + H2O. It participates in amino-acid biosynthesis; L-isoleucine biosynthesis; L-isoleucine from 2-oxobutanoate: step 3/4. Its pathway is amino-acid biosynthesis; L-valine biosynthesis; L-valine from pyruvate: step 3/4. In terms of biological role, functions in the biosynthesis of branched-chain amino acids. Catalyzes the dehydration of (2R,3R)-2,3-dihydroxy-3-methylpentanoate (2,3-dihydroxy-3-methylvalerate) into 2-oxo-3-methylpentanoate (2-oxo-3-methylvalerate) and of (2R)-2,3-dihydroxy-3-methylbutanoate (2,3-dihydroxyisovalerate) into 2-oxo-3-methylbutanoate (2-oxoisovalerate), the penultimate precursor to L-isoleucine and L-valine, respectively. The chain is Dihydroxy-acid dehydratase from Buchnera aphidicola subsp. Diuraphis noxia.